Reading from the N-terminus, the 286-residue chain is Acyl-CoA-binding domain-containing protein 6 (286 aa).

Positions 1–24 (MASPGVLEESSSGEACSGGCPEQW) are disordered. Over residues 8 to 22 (EESSSGEACSGGCPE) the composition is skewed to low complexity. The ACB domain maps to 32 to 117 (LQGQFEQAAK…VKKLDPDWSP (86 aa)). Residues 59 to 63 (YARYK), Lys85, and Tyr104 contribute to the an acyl-CoA site. ANK repeat units lie at residues 182–211 (EGRCLLHWACDRGHTQLVSVLLFHNAHINM) and 215–244 (EGQTPLHYASACEFPDIVDLLLDHGADPSL).

It localises to the cytoplasm. The protein localises to the nucleus. In terms of biological role, binds long-chain acyl-coenzyme A molecules with a strong preference for unsaturated C18:1-CoA. Does not bind fatty acids. Plays a role in protein N-myristoylation. This chain is Acyl-CoA-binding domain-containing protein 6 (acbd6), found in Xenopus tropicalis (Western clawed frog).